A 37-amino-acid polypeptide reads, in one-letter code: Large ribosomal subunit protein bL36c (37 aa).

This sequence belongs to the bacterial ribosomal protein bL36 family.

The protein resides in the plastid. Its subcellular location is the chloroplast. The polypeptide is Large ribosomal subunit protein bL36c (Oenothera argillicola (Appalachian evening primrose)).